The primary structure comprises 448 residues: Multiple inositol polyphosphate phosphatase 1 (448 aa).

Positions 1–19 are cleaved as a signal peptide; it reads MAPRRAACLLPLLVAVASA. Histidine 69 is a catalytic residue. Asparagine 203, asparagine 257, asparagine 409, and asparagine 441 each carry an N-linked (GlcNAc...) asparagine glycan. Residues 445–448 carry the Prevents secretion from ER motif; the sequence is ADEL.

It belongs to the histidine acid phosphatase family. MINPP1 subfamily. N-glycosylated. As to expression, present in growth plate chondrocytes but not detectable in articular chondrocytes (at protein level). Spatially restricted to chondrocytes in the lower portion of the proliferative zone and the upper portion of the hypertrophic zone in the growth plate of long bones (at protein level). Weakly expressed in kidney, liver, lung, skin and spleen, and not detected in brain, heart and muscle.

It localises to the endoplasmic reticulum lumen. The protein resides in the secreted. Its subcellular location is the cell membrane. The catalysed reaction is 1D-myo-inositol hexakisphosphate + H2O = 1D-myo-inositol 1,2,4,5,6-pentakisphosphate + phosphate. It carries out the reaction 1D-myo-inositol 1,2,4,5,6-pentakisphosphate + H2O = 1D-myo-inositol 1,2,5,6-tetrakisphosphate + phosphate. It catalyses the reaction 1D-myo-inositol 1,2,5,6-tetrakisphosphate + H2O = 1D-myo-inositol 1,2,6-trisphosphate + phosphate. The enzyme catalyses 1D-myo-inositol 1,2,6-trisphosphate + H2O = 1D-myo-inositol 1,2-bisphosphate + phosphate. The catalysed reaction is 1D-myo-inositol 1,2-bisphosphate + H2O = 1D-myo-inositol 2-phosphate + phosphate. It carries out the reaction 1D-myo-inositol hexakisphosphate + H2O = 1D-myo-inositol 1,2,3,5,6-pentakisphosphate + phosphate. It catalyses the reaction 1D-myo-inositol 1,2,3,5,6-pentakisphosphate + H2O = 1D-myo-inositol 1,2,3,6-tetrakisphosphate + phosphate. The enzyme catalyses 1D-myo-inositol 1,2,3,6-tetrakisphosphate + H2O = 1D-myo-inositol 1,2,3-trisphosphate + phosphate. The catalysed reaction is 1D-myo-inositol 1,2,3-trisphosphate + H2O = 1D-myo-inositol 2,3-bisphosphate + phosphate. It carries out the reaction 1D-myo-inositol 2,3-bisphosphate + H2O = 1D-myo-inositol 2-phosphate + phosphate. It catalyses the reaction 1D-myo-inositol 1,3,4,5,6-pentakisphosphate + H2O = 1D-myo-inositol 1,4,5,6-tetrakisphosphate + phosphate. The enzyme catalyses 1D-myo-inositol 1,4,5,6-tetrakisphosphate + H2O = 1D-myo-inositol 1,4,5-trisphosphate + phosphate. The catalysed reaction is (2R)-2,3-bisphosphoglycerate + H2O = (2R)-2-phosphoglycerate + phosphate. In terms of biological role, multiple inositol polyphosphate phosphatase that hydrolyzes 1D-myo-inositol 1,3,4,5,6-pentakisphosphate (InsP5[2OH]) and 1D-myo-inositol hexakisphosphate (InsP6) to a range of less phosphorylated inositol phosphates. This regulates the availability of these various small molecule second messengers and metal chelators which control many aspects of cell physiology. Has a weak in vitro activity towards 1D-myo-inositol 1,4,5-trisphosphate which is unlikely to be physiologically relevant. By regulating intracellular inositol polyphosphates pools, which act as metal chelators, it may control the availability of intracellular calcium and iron, which are important for proper neuronal development and homeostasis. May have a dual substrate specificity, and function as a 2,3-bisphosphoglycerate 3-phosphatase hydrolyzing 2,3-bisphosphoglycerate to 2-phosphoglycerate. 2,3-bisphosphoglycerate (BPG) is formed as part of the Rapoport-Luebering glycolytic bypass and is a regulator of systemic oxygen homeostasis as the major allosteric effector of hemoglobin. The polypeptide is Multiple inositol polyphosphate phosphatase 1 (MINPP1) (Gallus gallus (Chicken)).